A 1173-amino-acid chain; its full sequence is Thrombospondin-1 (1173 aa).

The N-terminal stretch at 1–18 is a signal peptide; the sequence is MKGIFLLLMLVMPQTHQA. The region spanning 22 to 224 is the Laminin G-like domain; sequence GNDDNSVFDL…LQNVRFVFGT (203 aa). The tract at residues 50 to 98 is heparin-binding; the sequence is HLVKGPDPSSPAYRIEDADLIPPLPEDKFQDLLDAIRADRGFILLATLR. Residues N155 and N158 are each glycosylated (N-linked (GlcNAc...) asparagine). A disulfide bridge connects residues C174 and C235. N-linked (GlcNAc...) asparagine glycans are attached at residues N250 and N363. Residues 319 to 376 form the VWFC domain; sequence GVCLHNGVLHKNRDEWTVDSCTECTCQNSATICRKVSCPLMPCTNATIPDGECCPRCW. TSP type-1 domains follow at residues 382–432, 438–493, and 495–550; these read DDDW…QDCD, DGGW…DPCP, and NGQW…QDCP. Cystine bridges form between C394-C426, C398-C431, C409-C416, C450-C487, C454-C492, C465-C477, C507-C544, C511-C549, C522-C534, C554-C565, C559-C575, C578-C589, C595-C611, C602-C620, C623-C647, C653-C666, C660-C679, and C681-C692. The region spanning 550–590 is the EGF-like 1 domain; the sequence is PIDGCLSNPCFAGVKCTSFIDGSWKCGSCPPGYRGNGITCK. Positions 649 to 693 constitute an EGF-like 2 domain; that stretch reads PRNPCADGTHDCHKNARCIYLGHYSDPMFRCECRPGYAGNGIICG. TSP type-3 repeat units follow at residues 694 to 729, 730 to 765, 766 to 788, 789 to 824, 825 to 847, 848 to 885, 886 to 921, and 922 to 957; these read EDTD…NSGQ, EDYD…NPAQ, YDYD…NPDQ, ADTD…NVDQ, KDTD…NPEQ, TDSD…NANQ, ADHD…NPDQ, and TDTN…EIST. N705 and N711 each carry an N-linked (GlcNAc...) asparagine glycan. Intrachain disulfides connect C708/C716, C721/C741, C757/C777, C780/C800, C816/C836, C839/C859, C877/C897, C913/C933, and C949/C1170. The disordered stretch occupies residues 838 to 935; it reads NCPLEHNPEQ…GDGRGDACQY (98 aa). Positions 886–897 are enriched in basic and acidic residues; the sequence is ADHDKDGKGDAC. The short motif at 929–931 is the Cell attachment site element; sequence RGD. The TSP C-terminal domain maps to 961 to 1173; it reads RKFQMVPLDP…SDLKYECRDS (213 aa). N1070 is a glycosylation site (N-linked (GlcNAc...) asparagine).

It belongs to the thrombospondin family. Homotrimer; disulfide-linked.

It is found in the secreted. The protein localises to the cell surface. It localises to the extracellular space. Its subcellular location is the extracellular matrix. The protein resides in the endoplasmic reticulum. It is found in the sarcoplasmic reticulum. Functionally, adhesive glycoprotein that mediates cell-to-cell and cell-to-matrix interactions. Can bind to fibrinogen, fibronectin, laminin, type V collagen and integrins alpha-V/beta-1, alpha-V/beta-3 and alpha-IIb/beta-3. May play a role in ER stress response. The sequence is that of Thrombospondin-1 (thbs1) from Xenopus laevis (African clawed frog).